The sequence spans 291 residues: MASLKDMRVRIASTKATQKITKAMQMVAASKLRRAQMAAEAARPYAEKMDAVISNIAGAAAGSPGAPVLLAGTGKDQVHLLLVCTGERGLSGAFNSSIVRLARERAYALMNQGKTVKFFCVGRKGYEQLRRTFDKQIIENIELRSVRQLGFVNAEDIAQKVIARFNNGEFDVCTLFYSRFKSVISQIPTAQQLIPLVVEAPAAGSVATSYEYEPEEDEILSTLLPRNLAVQIFRALLENNASFYGAQMSAMDNATRNAGDMIRKQTLIYNRTRQAMITKELIEIISGAEAI.

The protein belongs to the ATPase gamma chain family. As to quaternary structure, F-type ATPases have 2 components, CF(1) - the catalytic core - and CF(0) - the membrane proton channel. CF(1) has five subunits: alpha(3), beta(3), gamma(1), delta(1), epsilon(1). CF(0) has three main subunits: a, b and c.

It is found in the cell inner membrane. Produces ATP from ADP in the presence of a proton gradient across the membrane. The gamma chain is believed to be important in regulating ATPase activity and the flow of protons through the CF(0) complex. This chain is ATP synthase gamma chain, found in Rhodopseudomonas palustris (strain BisB5).